The chain runs to 103 residues: Histone H4 (103 aa).

Position 6 is an N6-acetyl-N6-methyllysine; alternate (K6). An N6-methyllysine; alternate mark is found at K6, K9, and K13. K13 is subject to N6-acetyl-N6-methyllysine; alternate. A DNA-binding region spans residues K17–K21. Residue K92 is modified to N6-glutaryllysine.

The protein belongs to the histone H4 family. As to quaternary structure, the nucleosome is a histone octamer containing two molecules each of H2A, H2B, H3 and H4 assembled in one H3-H4 heterotetramer and two H2A-H2B heterodimers. The octamer wraps approximately 147 bp of DNA. Glutarylation at Lys-92 (H4K91glu) destabilizes nucleosomes by promoting dissociation of the H2A-H2B dimers from nucleosomes.

The protein localises to the nucleus. It is found in the chromosome. Core component of nucleosome. Nucleosomes wrap and compact DNA into chromatin, limiting DNA accessibility to the cellular machineries which require DNA as a template. Histones thereby play a central role in transcription regulation, DNA repair, DNA replication and chromosomal stability. DNA accessibility is regulated via a complex set of post-translational modifications of histones, also called histone code, and nucleosome remodeling. This chain is Histone H4 (H4.1), found in Mortierella alpina (Oleaginous fungus).